Here is a 91-residue protein sequence, read N- to C-terminus: uncharacterized protein (91 aa).

This is an uncharacterized protein from Rickettsia conorii (strain ATCC VR-613 / Malish 7).